A 61-amino-acid polypeptide reads, in one-letter code: Large ribosomal subunit protein bL32 (61 aa).

Residues 1–16 show a composition bias toward basic residues; sequence MAVPKRKTSPSKRGMR. The disordered stretch occupies residues 1 to 33; sequence MAVPKRKTSPSKRGMRRSADGLKAPTYVEDKNS.

This sequence belongs to the bacterial ribosomal protein bL32 family.

This chain is Large ribosomal subunit protein bL32, found in Allorhizobium ampelinum (strain ATCC BAA-846 / DSM 112012 / S4) (Agrobacterium vitis (strain S4)).